Here is a 184-residue protein sequence, read N- to C-terminus: Large ribosomal subunit protein uL6 (184 aa).

It belongs to the universal ribosomal protein uL6 family. In terms of assembly, part of the 50S ribosomal subunit.

In terms of biological role, this protein binds to the 23S rRNA, and is important in its secondary structure. It is located near the subunit interface in the base of the L7/L12 stalk, and near the tRNA binding site of the peptidyltransferase center. This is Large ribosomal subunit protein uL6 from Mycoplasma pneumoniae (strain ATCC 29342 / M129 / Subtype 1) (Mycoplasmoides pneumoniae).